The following is a 1406-amino-acid chain: DNA topoisomerase 2 (1406 aa).

Residues Asn69, Asn98, Ser126–Asn128, and Gly139–Lys146 each bind ATP. The segment at Lys332–Lys334 is interaction with DNA. An ATP-binding site is contributed by Gln363–Lys365. One can recognise a Toprim domain in the interval Cys441–Ile555. Residues Glu447, Asp524, and Asp526 each coordinate Mg(2+). Residues Ile690–Leu1159 enclose the Topo IIA-type catalytic domain. Tyr780 (O-(5'-phospho-DNA)-tyrosine intermediate) is an active-site residue. Positions Lys963–Asn972 are interaction with DNA. Residues Glu1079–Glu1089 are compositionally biased toward acidic residues. Disordered regions lie at residues Glu1079–Pro1106, Lys1183–Lys1215, Lys1230–Gly1287, and Asp1303–Glu1406. Positions Glu1090–Glu1100 are enriched in basic and acidic residues. A compositionally biased stretch (basic residues) spans Lys1204–Ile1214. Polar residues predominate over residues Asp1261–Phe1274. The span at Ala1326 to Ala1336 shows a compositional bias: basic residues. 2 stretches are compositionally biased toward acidic residues: residues Ser1341–Val1359 and Glu1381–Glu1406.

It belongs to the type II topoisomerase family. As to quaternary structure, homodimer. Mg(2+) serves as cofactor. It depends on Mn(2+) as a cofactor. Ca(2+) is required as a cofactor.

The protein localises to the nucleus. The catalysed reaction is ATP-dependent breakage, passage and rejoining of double-stranded DNA.. Its function is as follows. Control of topological states of DNA by transient breakage and subsequent rejoining of DNA strands. Topoisomerase II makes double-strand breaks. The sequence is that of DNA topoisomerase 2 (TOP2) from Candida glabrata (strain ATCC 2001 / BCRC 20586 / JCM 3761 / NBRC 0622 / NRRL Y-65 / CBS 138) (Yeast).